The sequence spans 868 residues: Alanine--tRNA ligase (868 aa).

Zn(2+)-binding residues include His556, His560, Cys666, and His670.

This sequence belongs to the class-II aminoacyl-tRNA synthetase family. Zn(2+) serves as cofactor.

The protein resides in the cytoplasm. It carries out the reaction tRNA(Ala) + L-alanine + ATP = L-alanyl-tRNA(Ala) + AMP + diphosphate. Catalyzes the attachment of alanine to tRNA(Ala) in a two-step reaction: alanine is first activated by ATP to form Ala-AMP and then transferred to the acceptor end of tRNA(Ala). Also edits incorrectly charged Ser-tRNA(Ala) and Gly-tRNA(Ala) via its editing domain. The chain is Alanine--tRNA ligase from Elusimicrobium minutum (strain Pei191).